Here is a 96-residue protein sequence, read N- to C-terminus: Defensin-like protein 69 (96 aa).

The N-terminal stretch at Met1–Ser19 is a signal peptide. 4 disulfides stabilise this stretch: Cys37–Cys86, Cys41–Cys64, Cys50–Cys84, and Cys54–Cys85.

It belongs to the DEFL family.

The protein localises to the secreted. The chain is Defensin-like protein 69 from Arabidopsis thaliana (Mouse-ear cress).